A 441-amino-acid polypeptide reads, in one-letter code: Ribosomal protein uS12 methylthiotransferase RimO (441 aa).

Residues proline 8–proline 118 form the MTTase N-terminal domain. [4Fe-4S] cluster is bound by residues cysteine 17, cysteine 53, cysteine 82, cysteine 150, cysteine 154, and cysteine 157. The region spanning leucine 136–glutamate 373 is the Radical SAM core domain. In terms of domain architecture, TRAM spans glutamine 376–valine 441.

This sequence belongs to the methylthiotransferase family. RimO subfamily. The cofactor is [4Fe-4S] cluster.

The protein localises to the cytoplasm. It catalyses the reaction L-aspartate(89)-[ribosomal protein uS12]-hydrogen + (sulfur carrier)-SH + AH2 + 2 S-adenosyl-L-methionine = 3-methylsulfanyl-L-aspartate(89)-[ribosomal protein uS12]-hydrogen + (sulfur carrier)-H + 5'-deoxyadenosine + L-methionine + A + S-adenosyl-L-homocysteine + 2 H(+). Catalyzes the methylthiolation of an aspartic acid residue of ribosomal protein uS12. This Escherichia coli (strain UTI89 / UPEC) protein is Ribosomal protein uS12 methylthiotransferase RimO.